The primary structure comprises 1883 residues: AF4/FMR2 family member lilli (1883 aa).

Over residues 1 to 45 the composition is skewed to low complexity; that stretch reads MAQQQQQQHLQQQQQQHHQQQQLQQLQQQQQLPQYNNNLYNLNYN. 17 disordered regions span residues 1–88, 140–311, 329–381, 449–540, 609–654, 796–827, 844–901, 922–962, 992–1018, 1039–1075, 1115–1145, 1170–1238, 1358–1413, 1450–1510, 1543–1583, 1595–1641, and 1783–1803; these read MAQQ…SEGD, INST…EKDI, SIAA…SCTT, MPTP…HHQH, LGGG…HLSR, SISS…TLQI, MQQK…KKHA, TAAA…LAKG, VAGS…LHAA, TAAA…ATAT, KNNR…QHKQ, QHQQ…KSDK, YAAE…GART, EHGV…DQVS, ANGS…KATT, QTST…PPSD, and PSNS…RIVP. Residues 57-80 show a composition bias toward basic and acidic residues; it reads REKYERQQGIQSDDRETSLFEAPR. Composition is skewed to low complexity over residues 140-154, 161-178, 223-253, and 362-381; these read INST…SLLP, QQQQ…QQQQ, SASS…ASTA, and PLNS…SCTT. A compositionally biased stretch (pro residues) spans 450–462; sequence PTPPKASPTPPTA. At threonine 458 the chain carries Phosphothreonine. Residues 466-479 are compositionally biased toward basic and acidic residues; the sequence is LKSEKNHSLEKQDS. The segment covering 481-491 has biased composition (acidic residues); the sequence is LENDLELSESD. Phosphoserine is present on residues serine 488 and serine 490. Residues 500 to 540 are compositionally biased toward low complexity; it reads SAGNSSNSSETDSSESGSEASSKGEAQQQQQQQQQLLHHQH. Residues 609–625 show a composition bias toward gly residues; that stretch reads LGGGGGSGSTGGGGGSS. 2 stretches are compositionally biased toward low complexity: residues 626–639 and 796–813; these read SSGM…SSSN and SISS…SAAG. The span at 867-877 shows a compositional bias: basic residues; it reads PRQKKPRKKKM. 2 positions are modified to phosphoserine: serine 887 and serine 888. The a.T hook DNA-binding region spans 930 to 942; that stretch reads KKGRGRPRKQQQQ. Residues 939 to 962 show a composition bias toward low complexity; that stretch reads QQQQLQQTQSGNLSSASAGSLAKG. A phosphoserine mark is found at serine 953 and serine 955. 5 stretches are compositionally biased toward low complexity: residues 1124 to 1145, 1170 to 1186, 1200 to 1222, 1362 to 1376, and 1385 to 1399; these read SSSN…QHKQ, QHQQ…QQQQ, SSSS…SSSS, QQQQ…QQLH, and HYQQ…KAQQ. Residues 1450–1467 are compositionally biased toward basic and acidic residues; that stretch reads EHGVKPEPELDAGYEAKY. Position 1546 is a phosphoserine (serine 1546). A Phosphothreonine modification is found at threonine 1548. 2 stretches are compositionally biased toward low complexity: residues 1558–1583 and 1595–1606; these read QQQQ…KATT and QTSTTATQQPTT. A compositionally biased stretch (pro residues) spans 1614 to 1625; that stretch reads TPPPVAPPPPPR. The segment covering 1783–1794 has biased composition (low complexity); sequence PSNSVGSQGSGS.

This sequence belongs to the AF4 family.

It is found in the nucleus. Functionally, has a role in transcriptional regulation. Acts in parallel with the Ras/MAPK and the PI3K/PKB pathways in the control of cell identity and cellular growth. Essential for regulation of the cytoskeleton and cell growth but not for cell proliferation or growth rate. Required specifically for the microtubule-based basal transport of lipid droplets. Plays a partially redundant function downstream of Raf in cell fate specification in the developing eye. Pair-rule protein that regulates embryonic cellularization, gastrulation and segmentation. The chain is AF4/FMR2 family member lilli from Drosophila grimshawi (Hawaiian fruit fly).